The sequence spans 147 residues: uncharacterized protein (147 aa).

The region spanning 44–147 is the HTH LytTR-type domain; that stretch reads LVGYIDKEIH…LKSIKERLSI (104 aa).

It is found in the cytoplasm. This is an uncharacterized protein from Staphylococcus aureus (strain COL).